Here is a 474-residue protein sequence, read N- to C-terminus: MLGESEVRDKCGIVGIYSQDKKTGVASQIYYALYALQHRGQESAGISTFNGNDILTHRGMGLVCDVFNPEKLEELKGNVGIGHVRYSTTGESRIENSQPFWSEFQGGKIAIAHNGDIINSMELREELEEEGHNFVSTTDSEVICHLLSREYDEKPNMIYSIKRVSEQLVGSYSLVVLLNQDLYVVRDPVGIKPLAFARKGSTQIVASETVAFDVIGAEHVRDVQPGEILHLNRGKSYWVANAPNTRRAHCMFEYVYFARPDSVIDGRNVYRVRLNIGEALYREHPANADVVVPVPDSSIPAAIGYSRASGIPYGEGLIKNRYVGRTFIMPTQEERETAVKLKMNPIRSELEGKRIVLIDDSIVRGTTSRALIDIIRDAGAEEIHLRIGCPPIKSPCYYGIAMATKKELIASTRNVEEIRRIIGVDSLGYLSIESLVECIGIKKGFLCTGCLDGDYPTPLPSDISEYEAMRSCSR.

Positions 1 to 10 (MLGESEVRDK) are excised as a propeptide. The Nucleophile role is filled by cysteine 11. The Glutamine amidotransferase type-2 domain maps to 11-234 (CGIVGIYSQD…PGEILHLNRG (224 aa)). A [4Fe-4S] cluster-binding site is contributed by cysteine 250. Positions 297, 359, and 360 each coordinate Mg(2+). [4Fe-4S] cluster-binding residues include cysteine 396, cysteine 447, and cysteine 450.

The protein in the C-terminal section; belongs to the purine/pyrimidine phosphoribosyltransferase family. Mg(2+) serves as cofactor. The cofactor is [4Fe-4S] cluster.

The catalysed reaction is 5-phospho-beta-D-ribosylamine + L-glutamate + diphosphate = 5-phospho-alpha-D-ribose 1-diphosphate + L-glutamine + H2O. It participates in purine metabolism; IMP biosynthesis via de novo pathway; N(1)-(5-phospho-D-ribosyl)glycinamide from 5-phospho-alpha-D-ribose 1-diphosphate: step 1/2. Its function is as follows. Catalyzes the formation of phosphoribosylamine from phosphoribosylpyrophosphate (PRPP) and glutamine. The sequence is that of Amidophosphoribosyltransferase from Methanothermobacter thermautotrophicus (strain ATCC 29096 / DSM 1053 / JCM 10044 / NBRC 100330 / Delta H) (Methanobacterium thermoautotrophicum).